The chain runs to 147 residues: uncharacterized protein (147 aa).

A helical transmembrane segment spans residues 71 to 91 (IDILAFVAGTVGVGSLVLLQF).

Its subcellular location is the virion. The protein resides in the host membrane. This is an uncharacterized protein from Acanthamoeba polyphaga mimivirus (APMV).